The chain runs to 712 residues: 3',5'-cyclic-AMP phosphodiesterase 4C (712 aa).

Disordered regions lie at residues 1–31 (MENL…APKH) and 45–64 (RFYS…LSPR). Basic residues predominate over residues 17–31 (SRSRGRHSMTRAPKH). The segment covering 48–64 (SDPDKSAGCRERDLSPR) has biased composition (basic and acidic residues). Position 73 is a phosphoserine (Ser-73). The disordered stretch occupies residues 181-200 (AKQGPVGNPSSSNQLPPAED). A PDEase domain is found at 312–641 (VQTDQEEQLA…EWYQSKIPRS (330 aa)). Catalysis depends on His-388, which acts as the Proton donor. His-388 lines the 3',5'-cyclic AMP pocket. Positions 388 and 392 each coordinate AMP. 4 residues coordinate Zn(2+): His-392, His-428, Asp-429, and Asp-546. AMP contacts are provided by Asp-429, Asp-546, Gln-597, and Phe-600. Asp-429 provides a ligand contact to Mg(2+). Asp-429 is a Mn(2+) binding site. 3',5'-cyclic AMP contacts are provided by Gln-597 and Phe-600. Disordered stretches follow at residues 636 to 655 (SKIP…GPDR) and 664 to 712 (EAEE…NQRT). Ser-641 is subject to Phosphoserine. A compositionally biased stretch (acidic residues) spans 664-678 (EAEEEDEEEEEEGEE).

The protein belongs to the cyclic nucleotide phosphodiesterase family. PDE4 subfamily. Part of a complex containing AKAP5, ADCY5, ADCY6 and PKD2. The cofactor is Zn(2+). Mg(2+) serves as cofactor. Mn(2+) is required as a cofactor. Expressed in various tissues but not in cells of the immune system.

The protein localises to the cell projection. It localises to the cilium. The enzyme catalyses 3',5'-cyclic AMP + H2O = AMP + H(+). The protein operates within purine metabolism; 3',5'-cyclic AMP degradation; AMP from 3',5'-cyclic AMP: step 1/1. Inhibited by rolipram. Hydrolyzes the second messenger cAMP, which is a key regulator of many important physiological processes. This is 3',5'-cyclic-AMP phosphodiesterase 4C from Homo sapiens (Human).